A 321-amino-acid polypeptide reads, in one-letter code: uncharacterized protein (321 aa).

Belongs to the NAD(P)-dependent epimerase/dehydratase family.

This is an uncharacterized protein from Staphylococcus aureus (strain COL).